Consider the following 1170-residue polypeptide: Cellulose synthase-like protein D2 (1170 aa).

Disordered stretches follow at residues 1-48 (MASS…RRTH), 54-73 (SYSR…MSPE), and 269-295 (NEVD…EFTS). Low complexity predominate over residues 10–24 (RHSNSSRLSRMSYSG). A compositionally biased stretch (gly residues) spans 273–288 (NGGGGGGGGGLGGGDG). 2 helical membrane-spanning segments follow: residues 311–331 (VLSP…LFLA) and 341–361 (AMWL…SWLL). Asp-441 is a catalytic residue. Residues 527-551 (HAREEIKAMKRQREAALDDVVEAVK) are a coiled coil. Asp-873 is a catalytic residue. 6 consecutive transmembrane segments (helical) span residues 955–975 (IFLI…QFIV), 981–1001 (TFLT…VLEI), 1027–1047 (LAAV…SFTL), 1070–1090 (SLMI…AVGF), 1104–1124 (LLGG…FAKG), and 1134–1154 (TIVF…WVAI).

Belongs to the glycosyltransferase 2 family. Plant cellulose synthase-like D subfamily.

Its subcellular location is the golgi apparatus membrane. Thought to be a Golgi-localized beta-glycan synthase that polymerize the backbones of noncellulosic polysaccharides (hemicelluloses) of plant cell wall. The sequence is that of Cellulose synthase-like protein D2 (CSLD2) from Oryza sativa subsp. japonica (Rice).